A 140-amino-acid chain; its full sequence is UPF0179 protein Msp_0996 (140 aa).

Belongs to the UPF0179 family.

The protein is UPF0179 protein Msp_0996 of Methanosphaera stadtmanae (strain ATCC 43021 / DSM 3091 / JCM 11832 / MCB-3).